A 151-amino-acid polypeptide reads, in one-letter code: Pyruvoyl-dependent arginine decarboxylase (151 aa).

The residue at position 42 (serine 42) is a Pyruvic acid (Ser).

The protein belongs to the PdaD family. Pyruvate is required as a cofactor.

The enzyme catalyses L-arginine + H(+) = agmatine + CO2. The polypeptide is Pyruvoyl-dependent arginine decarboxylase (Methanothermobacter thermautotrophicus (strain ATCC 29096 / DSM 1053 / JCM 10044 / NBRC 100330 / Delta H) (Methanobacterium thermoautotrophicum)).